Reading from the N-terminus, the 62-residue chain is Amolopin-p-MT1 (62 aa).

Positions 1 to 22 (MFTLKKSLLLLFFLGTISLSLC) are cleaved as a signal peptide. Positions 23–42 (EQERGADEEENGGEVTEEEV) are cleaved as a propeptide — removed in mature form.

This sequence belongs to the frog skin active peptide (FSAP) family. Brevinin subfamily. In terms of tissue distribution, expressed by the skin glands.

The protein resides in the secreted. Antimicrobial peptide. Active against a variety of Gram-negative and Gram-positive bacterial strains. Not active against fungi. Shows weak hemolytic activity against human erythrocytes. The sequence is that of Amolopin-p-MT1 from Amolops mantzorum (Sichuan torrent frog).